We begin with the raw amino-acid sequence, 142 residues long: MKTFVAKPETVKREWYVVDAADKTLGRLATEIASRLRGKHKPEYTPHVDTGDYIVVINAEKVVVTGNKAKGKMYYSHTGYPGGLKETNFEKLQAFKPEMIIEKAVKGMLPKGPLGRDMFRKMKVFAGPEHKHAAQQPQVLDI.

It belongs to the universal ribosomal protein uL13 family. Part of the 50S ribosomal subunit.

This protein is one of the early assembly proteins of the 50S ribosomal subunit, although it is not seen to bind rRNA by itself. It is important during the early stages of 50S assembly. In Pseudoalteromonas atlantica (strain T6c / ATCC BAA-1087), this protein is Large ribosomal subunit protein uL13.